The following is a 591-amino-acid chain: Aspartate--tRNA ligase (591 aa).

E175 is a binding site for L-aspartate. Residues Q199–K202 are aspartate. R221 is an L-aspartate binding site. ATP-binding positions include R221–E223 and Q230. H449 serves as a coordination point for L-aspartate. E483 lines the ATP pocket. R490 serves as a coordination point for L-aspartate. G535–R538 contributes to the ATP binding site.

The protein belongs to the class-II aminoacyl-tRNA synthetase family. Type 1 subfamily. Homodimer.

It is found in the cytoplasm. It carries out the reaction tRNA(Asp) + L-aspartate + ATP = L-aspartyl-tRNA(Asp) + AMP + diphosphate. Functionally, catalyzes the attachment of L-aspartate to tRNA(Asp) in a two-step reaction: L-aspartate is first activated by ATP to form Asp-AMP and then transferred to the acceptor end of tRNA(Asp). The polypeptide is Aspartate--tRNA ligase (Oceanobacillus iheyensis (strain DSM 14371 / CIP 107618 / JCM 11309 / KCTC 3954 / HTE831)).